Here is a 68-residue protein sequence, read N- to C-terminus: Large ribosomal subunit protein bL32 (68 aa).

Belongs to the bacterial ribosomal protein bL32 family.

The sequence is that of Large ribosomal subunit protein bL32 from Onion yellows phytoplasma (strain OY-M).